The chain runs to 204 residues: Fruiting body protein SC7 (204 aa).

The signal sequence occupies residues 1–16 (MKLTVILLTAVLAASA). The SCP domain maps to 62–185 (LKAHNNERAQ…KTLWYYVCNY (124 aa)). Asn-80, Asn-118, and Asn-134 each carry an N-linked (GlcNAc...) asparagine glycan.

Belongs to the CRISP family.

It localises to the secreted. The chain is Fruiting body protein SC7 (SC7) from Schizophyllum commune (Split gill fungus).